Consider the following 656-residue polypeptide: Squalene-hopene cyclase (656 aa).

One copy of the PFTB 1 repeat lies at 68-110 (EQKIANYLRRCQSREHWGWPVYYGGEFNISASVQAYFALKMTG). D396 (proton donor) is an active-site residue. PFTB repeat units follow at residues 417-459 (LDRA…ALLD), 485-525 (IERG…NASG), 533-582 (VLKC…GLMA), and 591-634 (VKRG…QFFP).

Belongs to the terpene cyclase/mutase family.

It carries out the reaction squalene = hop-22(29)-ene. It catalyses the reaction squalene + H2O = hopan-22-ol. Squalene cyclase that catalyzes the oxygen-independent cyclization of squalene into hopanoids, a class of cyclic triterpenoids including hop-22(29)-ene, hop-17(21)-ene, hop-21(22)-ene, and hopan-22-ol. The protein is Squalene-hopene cyclase of Schizosaccharomyces japonicus (strain yFS275 / FY16936) (Fission yeast).